A 713-amino-acid chain; its full sequence is Cytosolic endo-beta-N-acetylglucosaminidase (713 aa).

The tract at residues 1–36 (MIARKRKSNGSETTSGKIPKDDVSSESCLDQPADES) is disordered. The BRCT domain maps to 270–362 (FFDACDGFFT…DFRQNQDKFW (93 aa)).

The protein belongs to the glycosyl hydrolase 85 family.

The protein localises to the cytoplasm. Its subcellular location is the cytosol. The enzyme catalyses an N(4)-(oligosaccharide-(1-&gt;3)-[oligosaccharide-(1-&gt;6)]-beta-D-Man-(1-&gt;4)-beta-D-GlcNAc-(1-&gt;4)-alpha-D-GlcNAc)-L-asparaginyl-[protein] + H2O = an oligosaccharide-(1-&gt;3)-[oligosaccharide-(1-&gt;6)]-beta-D-Man-(1-&gt;4)-D-GlcNAc + N(4)-(N-acetyl-beta-D-glucosaminyl)-L-asparaginyl-[protein]. In terms of biological role, endoglycosidase that releases N-glycans from glycoproteins by cleaving the beta-1,4-glycosidic bond in the N,N'-diacetylchitobiose core. Involved in the processing of free oligosaccharides in the cytosol. The sequence is that of Cytosolic endo-beta-N-acetylglucosaminidase (engase) from Danio rerio (Zebrafish).